Consider the following 655-residue polypeptide: Putative calcium up-regulated protein J (655 aa).

A Ricin B-type lectin domain is found at 40-181 (KSRAMLKGDN…DNVCFQWDLE (142 aa)).

It belongs to the cup family.

This is Putative calcium up-regulated protein J (cupJ) from Dictyostelium discoideum (Social amoeba).